A 213-amino-acid chain; its full sequence is Uridine kinase (213 aa).

15-22 (GASASGKS) contacts ATP.

It belongs to the uridine kinase family.

The protein localises to the cytoplasm. The catalysed reaction is uridine + ATP = UMP + ADP + H(+). The enzyme catalyses cytidine + ATP = CMP + ADP + H(+). The protein operates within pyrimidine metabolism; CTP biosynthesis via salvage pathway; CTP from cytidine: step 1/3. Its pathway is pyrimidine metabolism; UMP biosynthesis via salvage pathway; UMP from uridine: step 1/1. In Pectobacterium atrosepticum (strain SCRI 1043 / ATCC BAA-672) (Erwinia carotovora subsp. atroseptica), this protein is Uridine kinase.